Consider the following 250-residue polypeptide: Acetylglutamate kinase (250 aa).

Substrate contacts are provided by residues 41–42 (GG), arginine 63, and asparagine 156.

The protein belongs to the acetylglutamate kinase family. ArgB subfamily.

Its subcellular location is the cytoplasm. It catalyses the reaction N-acetyl-L-glutamate + ATP = N-acetyl-L-glutamyl 5-phosphate + ADP. It functions in the pathway amino-acid biosynthesis; L-arginine biosynthesis; N(2)-acetyl-L-ornithine from L-glutamate: step 2/4. Its function is as follows. Catalyzes the ATP-dependent phosphorylation of N-acetyl-L-glutamate. The chain is Acetylglutamate kinase from Listeria monocytogenes serotype 4a (strain HCC23).